The following is a 261-amino-acid chain: uncharacterized protein (261 aa).

A divalent metal cation is bound by residues H7, H9, E96, H132, H156, and D211.

It belongs to the metallo-dependent hydrolases superfamily. TatD-type hydrolase family. Requires a divalent metal cation as cofactor.

This is an uncharacterized protein from Mycoplasma pneumoniae (strain ATCC 29342 / M129 / Subtype 1) (Mycoplasmoides pneumoniae).